The sequence spans 150 residues: Large ribosomal subunit protein uL11 (150 aa).

It belongs to the universal ribosomal protein uL11 family. In terms of assembly, part of the ribosomal stalk of the 50S ribosomal subunit. Interacts with L10 and the large rRNA to form the base of the stalk. L10 forms an elongated spine to which L12 dimers bind in a sequential fashion forming a multimeric L10(L12)X complex. Post-translationally, one or more lysine residues are methylated.

Functionally, forms part of the ribosomal stalk which helps the ribosome interact with GTP-bound translation factors. In Azobacteroides pseudotrichonymphae genomovar. CFP2, this protein is Large ribosomal subunit protein uL11.